Consider the following 1420-residue polypeptide: Apolipoprotein(a) (1420 aa).

Residues 19–30 (TAVAPPNVTPVP) show a composition bias toward low complexity. Positions 19-46 (TAVAPPNVTPVPSLEAPSEQAPTEQRPG) are disordered. Kringle domains lie at 49 to 127 (ECYH…LTQC), 163 to 241 (ECYH…LTQC), 277 to 355 (ECYH…LTQC), 391 to 469 (ECYH…LTRC), and 505 to 583 (ECYY…LTQC). Intrachain disulfides connect cysteine 50–cysteine 127, cysteine 71–cysteine 110, cysteine 99–cysteine 122, cysteine 164–cysteine 241, cysteine 185–cysteine 224, cysteine 213–cysteine 236, cysteine 278–cysteine 355, cysteine 299–cysteine 338, cysteine 327–cysteine 350, cysteine 392–cysteine 469, cysteine 413–cysteine 452, cysteine 441–cysteine 464, cysteine 506–cysteine 583, cysteine 527–cysteine 566, and cysteine 555–cysteine 578. Residues 598–617 (PDPSTQASSEEAPTEQSPEV) are disordered. Residues 600-616 (PSTQASSEEAPTEQSPE) show a composition bias toward polar residues. 5 consecutive Kringle domains span residues 619–697 (DCYH…LTQC), 725–803 (DCYH…LTQC), 839–917 (DCYQ…LTQC), 953–1031 (DCYH…LTQC), and 1067–1145 (QCYH…LTRC). Disulfide bonds link cysteine 620/cysteine 697, cysteine 641/cysteine 680, cysteine 669/cysteine 692, cysteine 726/cysteine 803, cysteine 747/cysteine 786, cysteine 775/cysteine 798, cysteine 840/cysteine 917, cysteine 861/cysteine 900, cysteine 889/cysteine 912, cysteine 954/cysteine 1031, cysteine 975/cysteine 1014, cysteine 1003/cysteine 1026, cysteine 1068/cysteine 1145, cysteine 1089/cysteine 1128, cysteine 1117/cysteine 1140, cysteine 1217/cysteine 1233, cysteine 1309/cysteine 1376, cysteine 1339/cysteine 1355, and cysteine 1366/cysteine 1394. The Peptidase S1 domain maps to 1191 to 1418 (IVGGCVAHPH…FVTWIEGVMR (228 aa)).

Belongs to the peptidase S1 family. Plasminogen subfamily. Disulfide-linked to apo-B100. Binds to fibronectin and decorin. N- and O-glycosylated.

In terms of biological role, apo(a) is the main constituent of lipoprotein(a) (Lp(a)). It has serine proteinase activity and is able of autoproteolysis. Inhibits tissue-type plasminogen activator 1. Lp(a) may be a ligand for megalin/Gp 330. This Macaca mulatta (Rhesus macaque) protein is Apolipoprotein(a) (LPA).